Reading from the N-terminus, the 121-residue chain is Small ribosomal subunit protein uS13 (121 aa).

Residues 94–121 (GLPLRGQRTRTNARTRKGPRKAGVALKK) are disordered.

This sequence belongs to the universal ribosomal protein uS13 family. Part of the 30S ribosomal subunit. Forms a loose heterodimer with protein S19. Forms two bridges to the 50S subunit in the 70S ribosome.

Functionally, located at the top of the head of the 30S subunit, it contacts several helices of the 16S rRNA. In the 70S ribosome it contacts the 23S rRNA (bridge B1a) and protein L5 of the 50S subunit (bridge B1b), connecting the 2 subunits; these bridges are implicated in subunit movement. Contacts the tRNAs in the A and P-sites. The sequence is that of Small ribosomal subunit protein uS13 from Ralstonia nicotianae (strain ATCC BAA-1114 / GMI1000) (Ralstonia solanacearum).